A 224-amino-acid chain; its full sequence is Cutinase 1 (224 aa).

A signal peptide spans 1–16; that stretch reads MKFLSVLSLAITLAAA. Residues C46 and C125 are joined by a disulfide bond. S136 acts as the Nucleophile in catalysis. Cysteines 187 and 194 form a disulfide. The active site involves D191. H204 functions as the Proton donor/acceptor in the catalytic mechanism.

This sequence belongs to the cutinase family. In terms of processing, the 2 disulfide bonds play a critical role in holding the catalytic residues in juxta-position; reduction of the disulfide bridges results in the complete inactivation of the enzyme. Post-translationally, the N-terminus is blocked.

The protein resides in the secreted. The enzyme catalyses cutin + H2O = cutin monomers.. Its activity is regulated as follows. Inhibited by diisopropyl fluorophosphate (DFP). In terms of biological role, catalyzes the hydrolysis of complex carboxylic polyesters found in the cell wall of plants. Degrades cutin, a macromolecule that forms the structure of the plant cuticle. Allows pathogenic fungi to penetrate through the cuticular barrier into the host plant during the initial stage of fungal infection. The polypeptide is Cutinase 1 (CUTA) (Colletotrichum gloeosporioides (Anthracnose fungus)).